Here is a 344-residue protein sequence, read N- to C-terminus: Lipase chaperone (344 aa).

Residues 14-34 (AVVYGVVGLAAIAGVAMWSGA) traverse the membrane as a helical segment.

This sequence belongs to the lipase chaperone family.

The protein localises to the cell inner membrane. Functionally, may be involved in the folding of the extracellular lipase during its passage through the periplasm. This is Lipase chaperone (lifO) from Burkholderia cepacia (Pseudomonas cepacia).